Here is a 379-residue protein sequence, read N- to C-terminus: Cell division protein FtsZ (379 aa).

GTP is bound by residues 18-22 (GGGVN), 105-107 (GTG), Glu-136, Arg-140, and Asp-184.

The protein belongs to the FtsZ family. In terms of assembly, homodimer. Polymerizes to form a dynamic ring structure in a strictly GTP-dependent manner. Interacts directly with several other division proteins.

The protein resides in the cytoplasm. Its function is as follows. Essential cell division protein that forms a contractile ring structure (Z ring) at the future cell division site. The regulation of the ring assembly controls the timing and the location of cell division. One of the functions of the FtsZ ring is to recruit other cell division proteins to the septum to produce a new cell wall between the dividing cells. Binds GTP and shows GTPase activity. This chain is Cell division protein FtsZ, found in Mycobacterium bovis (strain ATCC BAA-935 / AF2122/97).